The following is an 86-amino-acid chain: Small ribosomal subunit protein bS20 (86 aa).

Basic residues predominate over residues M1 to A11. The tract at residues M1–R27 is disordered.

The protein belongs to the bacterial ribosomal protein bS20 family.

Its function is as follows. Binds directly to 16S ribosomal RNA. The sequence is that of Small ribosomal subunit protein bS20 from Syntrophobacter fumaroxidans (strain DSM 10017 / MPOB).